The following is a 174-amino-acid chain: Peptide methionine sulfoxide reductase MsrA (174 aa).

C11 is a catalytic residue.

Belongs to the MsrA Met sulfoxide reductase family.

It carries out the reaction L-methionyl-[protein] + [thioredoxin]-disulfide + H2O = L-methionyl-(S)-S-oxide-[protein] + [thioredoxin]-dithiol. The enzyme catalyses [thioredoxin]-disulfide + L-methionine + H2O = L-methionine (S)-S-oxide + [thioredoxin]-dithiol. In terms of biological role, has an important function as a repair enzyme for proteins that have been inactivated by oxidation. Catalyzes the reversible oxidation-reduction of methionine sulfoxide in proteins to methionine. This Nitratiruptor sp. (strain SB155-2) protein is Peptide methionine sulfoxide reductase MsrA.